Reading from the N-terminus, the 747-residue chain is Homeobox-leucine zipper protein GLABRA 2 (747 aa).

Residues 31–112 (RNASSGSTNP…KKYHRHTTDQ (82 aa)) are disordered. The span at 58-68 (EMSSENSGPTR) shows a compositional bias: polar residues. Residues 73–90 (EDLEGEDHDDEEEEEEDG) show a composition bias toward acidic residues. Over residues 97 to 107 (TNKRKRKKYHR) the composition is skewed to basic residues. Residues 101-160 (KRKKYHRHTTDQIRHMEALFKETPHPDEKQRQQLSKQLGLAPRQVKFWFQNRRTQIKAIQ) constitute a DNA-binding region (homeobox). Positions 155-223 (QIKAIQERHE…LDKLRAALGR (69 aa)) form a coiled coil. In terms of domain architecture, START spans 250–489 (FALEKSRIAE…LQLHCERLVF (240 aa)).

It belongs to the HD-ZIP homeobox family. Class IV subfamily. Interacts with GIR1 and GIR2. In terms of tissue distribution, expressed in individual developing trichome cells of the emerging leaf primordia. Expressed in differentiating hairless cells of root epidermis.

Its subcellular location is the nucleus. Transcription factor involved in the determination of epidermal cell identity. Required for correct morphological development and maturation of trichomes. Regulates the frequency of trichome initiation and determines trichome spacing. Acts as a negative factor for root hair development. Required for ectopic repression of root hair development in a subset of epidermal cells. May suppress hair formation in root epidermis by promoting differentiation into hairless epidermal cells. Directly suppresses the bHLH transcription factor genes, RHD6, RSL1, RSL2, LRL1, and LRL2, which have diverse functions in root hair development. Required for normal development of seed coat mucilage. Involved in the control of seed oil accumulation. Acts as a negative regulator of anthocyanin biosynthesis. May directly repress the expression of some component genes from the MYB-bHLH-WD40 (MBW) transcriptional activator complex. The MBW complex activates the transcription of late biosynthesis genes in the flavonoid pathway, leading to the production of anthocyanins. This chain is Homeobox-leucine zipper protein GLABRA 2, found in Arabidopsis thaliana (Mouse-ear cress).